The sequence spans 129 residues: Small ribosomal subunit protein uS11 (129 aa).

It belongs to the universal ribosomal protein uS11 family. Part of the 30S ribosomal subunit. Interacts with proteins S7 and S18. Binds to IF-3.

In terms of biological role, located on the platform of the 30S subunit, it bridges several disparate RNA helices of the 16S rRNA. Forms part of the Shine-Dalgarno cleft in the 70S ribosome. This Bacillus cytotoxicus (strain DSM 22905 / CIP 110041 / 391-98 / NVH 391-98) protein is Small ribosomal subunit protein uS11.